Consider the following 345-residue polypeptide: uncharacterized protein (345 aa).

The 198-residue stretch at 1–198 (MDVLSAVLLA…LSEGLLDHEE (198 aa)) folds into the CNNM transmembrane domain. Transmembrane regions (helical) follow at residues 3–23 (VLSAVLLALLLIGANAFFVGA) and 95–115 (VPPALLHTLSLAIVVALHVLL). 2 consecutive CBS domains span residues 217 to 280 (AVPL…PQTV) and 285 to 342 (VVRP…MRDG). Residues 312–332 (LALVTADNGSVVGMVALEDVV) traverse the membrane as a helical segment.

It belongs to the TerC family.

The protein resides in the cell membrane. This is an uncharacterized protein from Mycobacterium tuberculosis (strain ATCC 25618 / H37Rv).